The primary structure comprises 54 residues: Ovomucoid (54 aa).

The region spanning 4–54 (VDCSEYPKPACTMEHRPLCGSDNQTYDNKCNFCNAVVESNGTLTLSHFGKC) is the Kazal-like domain. Cystine bridges form between Cys6–Cys36, Cys14–Cys33, and Cys22–Cys54. Residue Asn43 is glycosylated (N-linked (GlcNAc...) asparagine).

The protein localises to the secreted. In Guttera pucherani (Eastern crested guineafowl), this protein is Ovomucoid.